Reading from the N-terminus, the 284-residue chain is Diaminopimelate epimerase (284 aa).

The substrate site is built by Asn-20, Gln-53, and Asn-73. The Proton donor role is filled by Cys-82. Substrate-binding positions include 83-84 (GN), Asn-167, Asn-200, and 218-219 (ER). The active-site Proton acceptor is Cys-227. Residue 228–229 (GS) coordinates substrate.

It belongs to the diaminopimelate epimerase family. As to quaternary structure, homodimer.

The protein localises to the cytoplasm. The enzyme catalyses (2S,6S)-2,6-diaminopimelate = meso-2,6-diaminopimelate. It participates in amino-acid biosynthesis; L-lysine biosynthesis via DAP pathway; DL-2,6-diaminopimelate from LL-2,6-diaminopimelate: step 1/1. In terms of biological role, catalyzes the stereoinversion of LL-2,6-diaminopimelate (L,L-DAP) to meso-diaminopimelate (meso-DAP), a precursor of L-lysine and an essential component of the bacterial peptidoglycan. The polypeptide is Diaminopimelate epimerase (Xylella fastidiosa (strain M23)).